The following is a 127-amino-acid chain: Putative truncated L-serine dehydratase YIL168W (127 aa).

N6-(pyridoxal phosphate)lysine is present on Lys39.

This sequence belongs to the serine/threonine dehydratase family. It depends on pyridoxal 5'-phosphate as a cofactor.

The protein localises to the cytoplasm. The catalysed reaction is L-serine = pyruvate + NH4(+). Its pathway is carbohydrate biosynthesis; gluconeogenesis. In Saccharomyces cerevisiae (strain ATCC 204508 / S288c) (Baker's yeast), this protein is Putative truncated L-serine dehydratase YIL168W.